A 158-amino-acid polypeptide reads, in one-letter code: MARMHARKRGKSGSKRPPRTAPPIWLDYTVEDIENLVVKLRKEGYSTAMIGTILRDQYGIPTVKLFRDPDNPNRKLTITRILEKHGLAPEIPEDLMFLIRRAVNLRKHLEQHPKDLHSMRGLQLIESKIRRLVKYYKRKGKLPRDWRYDPEQAKLLVR.

The segment covering 1-18 has biased composition (basic residues); it reads MARMHARKRGKSGSKRPP. The disordered stretch occupies residues 1–21; sequence MARMHARKRGKSGSKRPPRTA.

This sequence belongs to the universal ribosomal protein uS15 family. In terms of assembly, part of the 30S ribosomal subunit.

The sequence is that of Small ribosomal subunit protein uS15 from Pyrococcus horikoshii (strain ATCC 700860 / DSM 12428 / JCM 9974 / NBRC 100139 / OT-3).